The primary structure comprises 310 residues: HPr kinase/phosphorylase (310 aa).

Active-site residues include His138 and Lys159. Position 153 to 160 (153 to 160 (GDSGIGKS)) interacts with ATP. A Mg(2+)-binding site is contributed by Ser160. The active-site Proton acceptor; for phosphorylation activity. Proton donor; for dephosphorylation activity is the Asp177. Residues 201–210 (LEIRGVGIID) are important for the catalytic mechanism of both phosphorylation and dephosphorylation. Residue Glu202 coordinates Mg(2+). Residue Arg243 is part of the active site. Positions 264–269 (PVKTGR) are important for the catalytic mechanism of dephosphorylation.

This sequence belongs to the HPrK/P family. In terms of assembly, homohexamer. Mg(2+) serves as cofactor.

The enzyme catalyses [HPr protein]-L-serine + ATP = [HPr protein]-O-phospho-L-serine + ADP + H(+). The catalysed reaction is [HPr protein]-O-phospho-L-serine + phosphate + H(+) = [HPr protein]-L-serine + diphosphate. Its function is as follows. Catalyzes the ATP- as well as the pyrophosphate-dependent phosphorylation of a specific serine residue in HPr, a phosphocarrier protein of the phosphoenolpyruvate-dependent sugar phosphotransferase system (PTS). HprK/P also catalyzes the pyrophosphate-producing, inorganic phosphate-dependent dephosphorylation (phosphorolysis) of seryl-phosphorylated HPr (P-Ser-HPr). The two antagonistic activities of HprK/P are regulated by several intracellular metabolites, which change their concentration in response to the absence or presence of rapidly metabolisable carbon sources (glucose, fructose, etc.) in the growth medium. Therefore, by controlling the phosphorylation state of HPr, HPrK/P is a sensor enzyme that plays a major role in the regulation of carbon metabolism and sugar transport: it mediates carbon catabolite repression (CCR), and regulates PTS-catalyzed carbohydrate uptake and inducer exclusion. The chain is HPr kinase/phosphorylase (hprK) from Streptococcus pyogenes serotype M3 (strain ATCC BAA-595 / MGAS315).